The following is a 138-amino-acid chain: Transcriptional regulator MraZ (138 aa).

2 consecutive SpoVT-AbrB domains span residues 3–45 (EFQH…PLAE) and 74–117 (ATEC…AAER).

The protein belongs to the MraZ family. In terms of assembly, forms oligomers.

It is found in the cytoplasm. Its subcellular location is the nucleoid. This Symbiobacterium thermophilum (strain DSM 24528 / JCM 14929 / IAM 14863 / T) protein is Transcriptional regulator MraZ.